We begin with the raw amino-acid sequence, 387 residues long: (S)-8-oxocitronellyl enol synthase (387 aa).

NADP(+) is bound by residues 36–38, 64–65, 82–83, 106–107, and Gln-140; these read TGI, RR, DI, and SW. Catalysis depends on residues Lys-144 and Tyr-177. Substrate contacts are provided by Lys-144 and Tyr-177. Residues Tyr-177 and 211–213 contribute to the NADP(+) site; that span reads SMM.

It belongs to the short-chain dehydrogenases/reductases (SDR) family. Highly divergent. In terms of tissue distribution, expressed in leaves.

The enzyme catalyses (S)-8-oxocitronellyl enol + NADP(+) = (6E)-8-oxogeranial + NADPH + H(+). It carries out the reaction (S)-8-oxocitronellyl enol + NAD(+) = (6E)-8-oxogeranial + NADH + H(+). It catalyses the reaction (R)-8-oxocitronellyl enol + NADP(+) = (6E)-8-oxogeranial + NADPH + H(+). Its function is as follows. Iridoid synthase that catalyzes the first step in generation of the iridoid ring scaffold using the linear monoterpene (6E)-8-oxogeranial as substrate. Reduces 8-oxogeranial, generating an unstable product that is subsequently cyclized into several possible products, either non-enzymically or by dedicated cyclases. Iridoids comprise a large family of distinctive bicyclic monoterpenes that possess a wide range of pharmacological activities, including anticancer, anti-inflammatory, antifungal and antibacterial activities. The polypeptide is (S)-8-oxocitronellyl enol synthase (Antirrhinum majus (Garden snapdragon)).